Reading from the N-terminus, the 880-residue chain is Lon protease (880 aa).

The segment at 1-37 is disordered; the sequence is MADYNDKNYLLHMSGPDSDTGPGIENEDPRAVENPGH. Basic and acidic residues predominate over residues 27-37; it reads EDPRAVENPGH. In terms of domain architecture, Lon N-terminal spans 57–251; it reads LPILPVRDVV…LVNTQLQREV (195 aa). An ATP-binding site is contributed by 404-411; that stretch reads GPPGVGKT. The Lon proteolytic domain occupies 640 to 821; it reads KLMPGMALGL…DELLPLVFEG (182 aa). Residues serine 727 and lysine 770 contribute to the active site. Positions 826–836 are enriched in gly residues; it reads GGVSGAGQAGD. The segment at 826–880 is disordered; the sequence is GGVSGAGQAGDKGGKSKAAAGKKDVVAARPAKPAAPARRRKDKTEDELPTAEAGA. The segment covering 852–861 has biased composition (low complexity); sequence AARPAKPAAP.

It belongs to the peptidase S16 family. In terms of assembly, homohexamer. Organized in a ring with a central cavity.

The protein resides in the cytoplasm. It catalyses the reaction Hydrolysis of proteins in presence of ATP.. In terms of biological role, ATP-dependent serine protease that mediates the selective degradation of mutant and abnormal proteins as well as certain short-lived regulatory proteins. Required for cellular homeostasis and for survival from DNA damage and developmental changes induced by stress. Degrades polypeptides processively to yield small peptide fragments that are 5 to 10 amino acids long. Binds to DNA in a double-stranded, site-specific manner. The polypeptide is Lon protease (Desulfovibrio desulfuricans (strain ATCC 27774 / DSM 6949 / MB)).